A 277-amino-acid chain; its full sequence is Elongation factor Ts (277 aa).

The segment at 79–82 (TDFV) is involved in Mg(2+) ion dislocation from EF-Tu.

Belongs to the EF-Ts family.

It is found in the cytoplasm. Associates with the EF-Tu.GDP complex and induces the exchange of GDP to GTP. It remains bound to the aminoacyl-tRNA.EF-Tu.GTP complex up to the GTP hydrolysis stage on the ribosome. The polypeptide is Elongation factor Ts (Phytoplasma australiense).